A 251-amino-acid chain; its full sequence is 2,3-bisphosphoglycerate-dependent phosphoglycerate mutase (251 aa).

Substrate is bound by residues 7-14, 20-21, Arg59, 86-89, Lys97, 113-114, and 186-187; these read RHGESEWN, TG, ERHY, RR, and GN. Catalysis depends on His8, which acts as the Tele-phosphohistidine intermediate. Catalysis depends on Glu86, which acts as the Proton donor/acceptor.

It belongs to the phosphoglycerate mutase family. BPG-dependent PGAM subfamily.

The enzyme catalyses (2R)-2-phosphoglycerate = (2R)-3-phosphoglycerate. It participates in carbohydrate degradation; glycolysis; pyruvate from D-glyceraldehyde 3-phosphate: step 3/5. Its function is as follows. Catalyzes the interconversion of 2-phosphoglycerate and 3-phosphoglycerate. This Treponema pallidum (strain Nichols) protein is 2,3-bisphosphoglycerate-dependent phosphoglycerate mutase.